The following is a 261-amino-acid chain: Ribosomal RNA small subunit methyltransferase J (261 aa).

S-adenosyl-L-methionine is bound by residues 111-112, 127-128, 163-164, and aspartate 181; these read RD, ER, and SS.

This sequence belongs to the methyltransferase superfamily. RsmJ family.

It localises to the cytoplasm. It catalyses the reaction guanosine(1516) in 16S rRNA + S-adenosyl-L-methionine = N(2)-methylguanosine(1516) in 16S rRNA + S-adenosyl-L-homocysteine + H(+). Its function is as follows. Specifically methylates the guanosine in position 1516 of 16S rRNA. The chain is Ribosomal RNA small subunit methyltransferase J from Shewanella sp. (strain MR-4).